Reading from the N-terminus, the 306-residue chain is Porphobilinogen deaminase (306 aa).

The residue at position 239 (Cys239) is an S-(dipyrrolylmethanemethyl)cysteine.

It belongs to the HMBS family. Monomer. Dipyrromethane is required as a cofactor.

The enzyme catalyses 4 porphobilinogen + H2O = hydroxymethylbilane + 4 NH4(+). Its pathway is porphyrin-containing compound metabolism; protoporphyrin-IX biosynthesis; coproporphyrinogen-III from 5-aminolevulinate: step 2/4. Tetrapolymerization of the monopyrrole PBG into the hydroxymethylbilane pre-uroporphyrinogen in several discrete steps. The protein is Porphobilinogen deaminase of Helicobacter pylori (strain G27).